The following is a 305-amino-acid chain: UDP-3-O-acyl-N-acetylglucosamine deacetylase (305 aa).

Residues H79, H238, and D242 each coordinate Zn(2+). H265 (proton donor) is an active-site residue.

This sequence belongs to the LpxC family. Zn(2+) serves as cofactor.

It catalyses the reaction a UDP-3-O-[(3R)-3-hydroxyacyl]-N-acetyl-alpha-D-glucosamine + H2O = a UDP-3-O-[(3R)-3-hydroxyacyl]-alpha-D-glucosamine + acetate. The protein operates within glycolipid biosynthesis; lipid IV(A) biosynthesis; lipid IV(A) from (3R)-3-hydroxytetradecanoyl-[acyl-carrier-protein] and UDP-N-acetyl-alpha-D-glucosamine: step 2/6. Its function is as follows. Catalyzes the hydrolysis of UDP-3-O-myristoyl-N-acetylglucosamine to form UDP-3-O-myristoylglucosamine and acetate, the committed step in lipid A biosynthesis. This is UDP-3-O-acyl-N-acetylglucosamine deacetylase from Aliivibrio fischeri (strain ATCC 700601 / ES114) (Vibrio fischeri).